A 481-amino-acid polypeptide reads, in one-letter code: 3-isopropylmalate dehydratase large subunit (481 aa).

The [4Fe-4S] cluster site is built by cysteine 357, cysteine 417, and cysteine 420.

Belongs to the aconitase/IPM isomerase family. LeuC type 1 subfamily. As to quaternary structure, heterodimer of LeuC and LeuD. The cofactor is [4Fe-4S] cluster.

It carries out the reaction (2R,3S)-3-isopropylmalate = (2S)-2-isopropylmalate. It participates in amino-acid biosynthesis; L-leucine biosynthesis; L-leucine from 3-methyl-2-oxobutanoate: step 2/4. Functionally, catalyzes the isomerization between 2-isopropylmalate and 3-isopropylmalate, via the formation of 2-isopropylmaleate. This chain is 3-isopropylmalate dehydratase large subunit, found in Mycolicibacterium vanbaalenii (strain DSM 7251 / JCM 13017 / BCRC 16820 / KCTC 9966 / NRRL B-24157 / PYR-1) (Mycobacterium vanbaalenii).